Consider the following 249-residue polypeptide: Enolase-phosphatase E1 (249 aa).

Belongs to the HAD-like hydrolase superfamily. MasA/MtnC family. Monomer. It depends on Mg(2+) as a cofactor.

It carries out the reaction 5-methylsulfanyl-2,3-dioxopentyl phosphate + H2O = 1,2-dihydroxy-5-(methylsulfanyl)pent-1-en-3-one + phosphate. It functions in the pathway amino-acid biosynthesis; L-methionine biosynthesis via salvage pathway; L-methionine from S-methyl-5-thio-alpha-D-ribose 1-phosphate: step 3/6. It participates in amino-acid biosynthesis; L-methionine biosynthesis via salvage pathway; L-methionine from S-methyl-5-thio-alpha-D-ribose 1-phosphate: step 4/6. Bifunctional enzyme that catalyzes the enolization of 2,3-diketo-5-methylthiopentyl-1-phosphate (DK-MTP-1-P) into the intermediate 2-hydroxy-3-keto-5-methylthiopentenyl-1-phosphate (HK-MTPenyl-1-P), which is then dephosphorylated to form the acireductone 1,2-dihydroxy-3-keto-5-methylthiopentene (DHK-MTPene). The polypeptide is Enolase-phosphatase E1 (Synechococcus sp. (strain CC9605)).